Reading from the N-terminus, the 179-residue chain is Large ribosomal subunit protein uL5 (179 aa).

It belongs to the universal ribosomal protein uL5 family. Part of the 50S ribosomal subunit; part of the 5S rRNA/L5/L18/L25 subcomplex. Contacts the 5S rRNA and the P site tRNA. Forms a bridge to the 30S subunit in the 70S ribosome.

This is one of the proteins that bind and probably mediate the attachment of the 5S RNA into the large ribosomal subunit, where it forms part of the central protuberance. In the 70S ribosome it contacts protein S13 of the 30S subunit (bridge B1b), connecting the 2 subunits; this bridge is implicated in subunit movement. Contacts the P site tRNA; the 5S rRNA and some of its associated proteins might help stabilize positioning of ribosome-bound tRNAs. The chain is Large ribosomal subunit protein uL5 from Variovorax paradoxus (strain S110).